The following is a 134-amino-acid chain: Small ribosomal subunit protein uS8c (134 aa).

It belongs to the universal ribosomal protein uS8 family. As to quaternary structure, part of the 30S ribosomal subunit.

The protein resides in the plastid. Its subcellular location is the chloroplast. In terms of biological role, one of the primary rRNA binding proteins, it binds directly to 16S rRNA central domain where it helps coordinate assembly of the platform of the 30S subunit. The sequence is that of Small ribosomal subunit protein uS8c (rps8) from Vitis vinifera (Grape).